Here is a 301-residue protein sequence, read N- to C-terminus: RNA polymerase II holoenzyme cyclin-like subunit (301 aa).

The 90-residue stretch at 53–142 folds into the Cyclin N-terminal domain; it reads QQLIKLGKRT…LGECEFALIS (90 aa).

This sequence belongs to the cyclin family. Cyclin C subfamily. In terms of assembly, component of the srb8-11 complex, a regulatory module of the Mediator complex.

The protein resides in the nucleus. Functionally, component of the srb8-11 complex. The srb8-11 complex is a regulatory module of the Mediator complex which is itself involved in regulation of basal and activated RNA polymerase II-dependent transcription. The srb8-11 complex may be involved in the transcriptional repression of a subset of genes regulated by Mediator. It may inhibit the association of the Mediator complex with RNA polymerase II to form the holoenzyme complex. The srb8-11 complex phosphorylates the C-terminal domain (CTD) of the largest subunit of RNA polymerase II. This Aspergillus terreus (strain NIH 2624 / FGSC A1156) protein is RNA polymerase II holoenzyme cyclin-like subunit (ssn8).